A 225-amino-acid chain; its full sequence is Gene 30 protein (225 aa).

Positions 48–73 (RNSELGHPEVKKEETTQQPEKGEGMA) are disordered. Basic and acidic residues predominate over residues 51–73 (ELGHPEVKKEETTQQPEKGEGMA).

Functionally, essential for DNA synthesis. This chain is Gene 30 protein (30), found in Bacillus phage SP01 (Bacteriophage SP01).